The following is a 403-amino-acid chain: Nucleolar protein 13 (403 aa).

Composition is skewed to basic and acidic residues over residues 1–35 and 75–97; these read MSETELSKEDAVTKKDNEEQVKKALLDPTKKRKAE and KSIEEYKEDAEKKKSGASEKDAQ. 2 disordered regions span residues 1–43 and 72–116; these read MSET…IDLK and IDPK…EVVK. The residue at position 2 (serine 2) is an N-acetylserine. Serine 2 is subject to Phosphoserine. Positions 99–108 are enriched in polar residues; that stretch reads EESTINTPTG. Threonine 105 bears the Phosphothreonine mark. RRM domains lie at 125–219 and 239–317; these read YGVW…DSEN and RILF…YGED. Residues 313-329 are compositionally biased toward basic and acidic residues; that stretch reads EYGEDRSKRQVRKKVEN. A disordered region spans residues 313–403; it reads EYGEDRSKRQ…PSQGKKVKFD (91 aa). Positions 330–344 are enriched in polar residues; sequence VSRNNSSSFDISNNK. Serine 335 carries the post-translational modification Phosphoserine. The segment covering 345–361 has biased composition (basic and acidic residues); the sequence is GYDRAGQDNGSKPEYKR. Over residues 371-381 the composition is skewed to polar residues; it reads DSNNRTKSSVA.

It localises to the nucleus. The protein localises to the nucleolus. This Saccharomyces cerevisiae (strain ATCC 204508 / S288c) (Baker's yeast) protein is Nucleolar protein 13 (NOP13).